The sequence spans 89 residues: Small ribosomal subunit protein uS15 (89 aa).

This sequence belongs to the universal ribosomal protein uS15 family. As to quaternary structure, part of the 30S ribosomal subunit. Forms a bridge to the 50S subunit in the 70S ribosome, contacting the 23S rRNA.

Functionally, one of the primary rRNA binding proteins, it binds directly to 16S rRNA where it helps nucleate assembly of the platform of the 30S subunit by binding and bridging several RNA helices of the 16S rRNA. Its function is as follows. Forms an intersubunit bridge (bridge B4) with the 23S rRNA of the 50S subunit in the ribosome. The chain is Small ribosomal subunit protein uS15 from Enterobacter sp. (strain 638).